Consider the following 296-residue polypeptide: Glycine N-acyltransferase (296 aa).

Lysine 16, lysine 127, and lysine 141 each carry N6-acetyllysine; alternate. N6-succinyllysine; alternate is present on residues lysine 16, lysine 127, and lysine 141. Lysine 159 is subject to N6-acetyllysine. Lysine 169 is modified (N6-succinyllysine). N6-acetyllysine; alternate occurs at positions 183 and 256. Lysine 183 and lysine 256 each carry N6-succinyllysine; alternate.

The protein belongs to the glycine N-acyltransferase family. In terms of tissue distribution, predominantly expressed in liver (at protein level) and kidney. Down-regulated in hepatocellular carcinoma and other liver cancers.

Its subcellular location is the mitochondrion. The catalysed reaction is an acyl-CoA + glycine = an N-acylglycine + CoA + H(+). It catalyses the reaction benzoyl-CoA + glycine = N-benzoylglycine + CoA + H(+). Its function is as follows. Mitochondrial acyltransferase which transfers an acyl group to the N-terminus of glycine and glutamine, although much less efficiently. Can conjugate numerous substrates to form a variety of N-acylglycines, with a preference for benzoyl-CoA over phenylacetyl-CoA as acyl donors. Thereby detoxify xenobiotics, such as benzoic acid or salicylic acid, and endogenous organic acids, such as isovaleric acid. In Homo sapiens (Human), this protein is Glycine N-acyltransferase (GLYAT).